The chain runs to 131 residues: Rhodopsin (131 aa).

Residues 1 to 16 (CGIDYYTRAPGYNNES) are Extracellular-facing. N14 carries an N-linked (GlcNAc...) asparagine glycan. A helical membrane pass occupies residues 17–38 (FVIYMFIVHFLIPLFIISFCYG). Residues 39-66 (NLLCAVKAAAAAQEESETTQRAEREVTR) lie on the Cytoplasmic side of the membrane. A helical transmembrane segment spans residues 67 to 88 (MVIMMVISYLVSWVPYASVAWY). The Extracellular portion of the chain corresponds to 89–100 (IFSNQGSEFGPV). A helical membrane pass occupies residues 101-122 (FMTIPAFFAKSSALYNPLIYVL). K110 carries the N6-(retinylidene)lysine modification. Residues 123–131 (MNKQFRHCM) lie on the Cytoplasmic side of the membrane.

Belongs to the G-protein coupled receptor 1 family. Opsin subfamily. Post-translationally, phosphorylated on some or all of the serine and threonine residues present in the C-terminal region. In terms of processing, contains one covalently linked retinal chromophore.

It localises to the membrane. The protein resides in the cell projection. Its subcellular location is the cilium. The protein localises to the photoreceptor outer segment. Functionally, photoreceptor required for image-forming vision at low light intensity. While most salt water fish species use retinal as chromophore, most freshwater fish use 3-dehydroretinal, or a mixture of retinal and 3-dehydroretinal. Light-induced isomerization of 11-cis to all-trans retinal triggers a conformational change that activates signaling via G-proteins. Subsequent receptor phosphorylation mediates displacement of the bound G-protein alpha subunit by arrestin and terminates signaling. In Coregonus autumnalis (Arctic cisco), this protein is Rhodopsin (rho).